A 117-amino-acid polypeptide reads, in one-letter code: Gamma-aminobutyric acid receptor-associated protein (117 aa).

Residues 1–22 (MKFVYKEEHPFEKRRSEGEKIR) are interaction with beta-tubulin. The interval 36–68 (APKARIGDLDKKKYLVPSDLTVGQFYFLIRKRI) is interaction with GABRG2. Residues 36-117 (APKARIGDLD…AYSDESVYGL (82 aa)) are interaction with GPHN. The tract at residues 48-50 (KYL) is interaction with LIR (LC3 nteracting Region) motif of ATG3. Gly-116 is lipidated: Phosphatidylethanolamine amidated glycine; alternate. A lipid anchor (Phosphatidylserine amidated glycine; alternate) is attached at Gly-116. A propeptide (removed in mature form) is located at residue Leu-117.

It belongs to the ATG8 family. As to quaternary structure, interacts with GPHN and NSF. Interacts with ATG3, ATG7 and ATG13. Interacts with alpha-tubulin. Interacts with beta-tubulin. Interacts with GABRG2. Interacts with RB1CC1. Interacts with ULK1. Interacts with CALR. Interacts with DDX47. Interacts with TP53INP1 and TP53INP2. Interacts with TBC1D5. Interacts with TBC1D25. Directly interacts with SQSTM1. Interacts with MAPK15. Interacts with TECPR2. Interacts with PCM1. Interacts with TRIM5 and TRIM21. Interacts with MEFV. Interacts with KIF21B. Interacts with WDFY3; this interaction is required for WDFY3 recruitment to MAP1LC3B-positive p62/SQSTM1 bodies. Interacts with FLCN; interaction regulates autophagy. Interacts with UBA5. Interacts with KBTBD6 and KBTBD7; the interaction is direct and required for the ubiquitination of TIAM1. Interacts with reticulophagy regulators RETREG1, RETREG2 and RETREG3. Interacts with IRGM. Interacts with STX17. Interacts with CT55; this interaction may be important for GABARAP protein stability. Interacts with DNM2. Interacts with NCOA4 (via C-terminus). Post-translationally, the precursor molecule is cleaved by ATG4 (ATG4A, ATG4B, ATG4C or ATG4D) to expose the glycine at the C-terminus and form the cytosolic form, GABARAP-I. The processed form is then activated by APG7L/ATG7, transferred to ATG3 and conjugated to phosphatidylethanolamine (PE) phospholipid to form the membrane-bound form, GABARAP-II. During non-canonical autophagy, the processed form is conjugated to phosphatidylserine (PS) phospholipid. ATG4 proteins also mediate the delipidation of PE-conjugated forms. In addition, ATG4B and ATG4D mediate delipidation of ATG8 proteins conjugated to PS during non-canonical autophagy. ATG4B constitutes the major protein for proteolytic activation. ATG4D is the main enzyme for delipidation activity. As to expression, expressed in brain (at protein level). Can be found in both somatodendritic and axonal compartment of neurons.

Its subcellular location is the cytoplasmic vesicle. It localises to the autophagosome membrane. The protein resides in the endomembrane system. It is found in the cytoplasm. The protein localises to the cytoskeleton. Its subcellular location is the golgi apparatus membrane. In terms of biological role, ubiquitin-like modifier that plays a role in intracellular transport of GABA(A) receptors and its interaction with the cytoskeleton. Involved in autophagy: while LC3s are involved in elongation of the phagophore membrane, the GABARAP/GATE-16 subfamily is essential for a later stage in autophagosome maturation. Through its interaction with the reticulophagy receptor TEX264, participates in the remodeling of subdomains of the endoplasmic reticulum into autophagosomes upon nutrient stress, which then fuse with lysosomes for endoplasmic reticulum turnover. Also required for the local activation of the CUL3(KBTBD6/7) E3 ubiquitin ligase complex, regulating ubiquitination a nd degradation of TIAM1, a guanyl-nucleotide exchange factor (GEF) that activates RAC1 and downstream signal transduction. Thereby, regulates different biological processes including the organization of the cytoskeleton, cell migration and proliferation. Involved in apoptosis. The chain is Gamma-aminobutyric acid receptor-associated protein from Rattus norvegicus (Rat).